We begin with the raw amino-acid sequence, 804 residues long: Phenylalanine--tRNA ligase beta subunit (804 aa).

Positions 38 to 148 (RAAFRAFTIA…ENAPVGTSFA (111 aa)) constitute a tRNA-binding domain. A B5 domain is found at 401-476 (HTARVIDFPV…RIHGINRIDP (76 aa)). Aspartate 454, aspartate 460, glutamate 463, and glutamate 464 together coordinate Mg(2+). An FDX-ACB domain is found at 710-803 (SLFQSLKRDY…VAKQTGGVLR (94 aa)).

This sequence belongs to the phenylalanyl-tRNA synthetase beta subunit family. Type 1 subfamily. As to quaternary structure, tetramer of two alpha and two beta subunits. Requires Mg(2+) as cofactor.

The protein localises to the cytoplasm. It carries out the reaction tRNA(Phe) + L-phenylalanine + ATP = L-phenylalanyl-tRNA(Phe) + AMP + diphosphate + H(+). The polypeptide is Phenylalanine--tRNA ligase beta subunit (Brucella abortus (strain 2308)).